We begin with the raw amino-acid sequence, 298 residues long: tRNA pseudouridine synthase A (298 aa).

The Nucleophile role is filled by Asp56. Tyr125 provides a ligand contact to substrate.

Belongs to the tRNA pseudouridine synthase TruA family. Homodimer.

The catalysed reaction is uridine(38/39/40) in tRNA = pseudouridine(38/39/40) in tRNA. Functionally, formation of pseudouridine at positions 38, 39 and 40 in the anticodon stem and loop of transfer RNAs. This is tRNA pseudouridine synthase A from Bifidobacterium animalis subsp. lactis (strain AD011).